A 312-amino-acid polypeptide reads, in one-letter code: Non-structural protein 12A (312 aa).

Residues 1–23 show a composition bias toward low complexity; the sequence is MFKSGSGSLKRSGSISSVKSFSG. Disordered stretches follow at residues 1 to 37, 62 to 97, and 112 to 159; these read MFKS…RGSV, FVPE…YNQN, and SSKG…SHGT. Positions 63–73 are enriched in basic and acidic residues; sequence VPEKTKSEGNL. Over residues 74–97 the composition is skewed to polar residues; that stretch reads KNKSSVITGNFGSSGPTNAHYNQN. The segment covering 122-134 has biased composition (basic and acidic residues); that stretch reads DARHTATDSRLSQ. The span at 135–154 shows a compositional bias: polar residues; sequence EVKQPFSEENASGNDLNTGR.

It belongs to the phytoreovirus non-structural protein Pns12A family.

It localises to the host cytoplasm. In terms of biological role, constituent of viral factories. This Rice dwarf virus (isolate O) (RDV) protein is Non-structural protein 12A.